A 267-amino-acid polypeptide reads, in one-letter code: Putative phosphoenolpyruvate synthase regulatory protein (267 aa).

147-154 (GVSRSGKT) contacts ADP.

It belongs to the pyruvate, phosphate/water dikinase regulatory protein family. PSRP subfamily.

It catalyses the reaction [pyruvate, water dikinase] + ADP = [pyruvate, water dikinase]-phosphate + AMP + H(+). The catalysed reaction is [pyruvate, water dikinase]-phosphate + phosphate + H(+) = [pyruvate, water dikinase] + diphosphate. Its function is as follows. Bifunctional serine/threonine kinase and phosphorylase involved in the regulation of the phosphoenolpyruvate synthase (PEPS) by catalyzing its phosphorylation/dephosphorylation. This chain is Putative phosphoenolpyruvate synthase regulatory protein, found in Cupriavidus necator (strain ATCC 17699 / DSM 428 / KCTC 22496 / NCIMB 10442 / H16 / Stanier 337) (Ralstonia eutropha).